Consider the following 201-residue polypeptide: MHNILEVIYWNKCSYERKKKILSRPIISNRFLIRNKVKEIISNVKSFGDRALYNYTNVFDNINLKNIRVSEEDIVSSHLHVSKELKLAVEVAFKNIKKFHSKQNVGSFNLKVQDNIYCQQIIRPIESIGLYIPNGSAPLLSTVLMLAIPANIAGCKRIMLCSPPPIMNEILYACKICEIKDVFQIGGAQAIAALGCGTETI.

This sequence belongs to the histidinol dehydrogenase family. As to quaternary structure, homodimer. The cofactor is Zn(2+).

It catalyses the reaction L-histidinol + 2 NAD(+) + H2O = L-histidine + 2 NADH + 3 H(+). The protein operates within amino-acid biosynthesis; L-histidine biosynthesis; L-histidine from 5-phospho-alpha-D-ribose 1-diphosphate: step 9/9. Functionally, catalyzes the sequential NAD-dependent oxidations of L-histidinol to L-histidinaldehyde and then to L-histidine. This is Histidinol dehydrogenase (hisD) from Buchnera aphidicola subsp. Schlechtendalia chinensis.